The chain runs to 378 residues: Sphingosine 1-phosphate receptor 3 (378 aa).

Topologically, residues 1–44 (MATTHAQGHQPVLGNDTLREHYDYVGKLAGRLRDPPEGGTLITT) are extracellular. An N-linked (GlcNAc...) asparagine glycan is attached at Asn-15. The chain crosses the membrane as a helical span at residues 45-65 (ILFLVTCSFIVLENLMVLIAI). Residues 66–74 (WKNNKFHNR) lie on the Cytoplasmic side of the membrane. A helical membrane pass occupies residues 75–95 (MYFFIGNLALCDLLAGIAYKV). The Extracellular portion of the chain corresponds to 96–115 (NILMSGRKTFSLSPTVWFLR). Residues 116-136 (EGSMFVALGASTCSLLAIAIE) form a helical membrane-spanning segment. The Cytoplasmic portion of the chain corresponds to 137–154 (RHLTMIKMRPYDANKKHR). The helical transmembrane segment at 155–175 (VFLLIGMCWLIAFSLGALPIL) threads the bilayer. Residues 176 to 196 (GWNCLENFPDCSTILPLYSKK) lie on the Extracellular side of the membrane. A helical transmembrane segment spans residues 197-217 (YIAFLISIFTAILVTIVILYA). The Cytoplasmic segment spans residues 218 to 244 (RIYCLVKSSSRRVANHNSERSMALLRT). Residues 245–265 (VVIVVSVFIACWSPLFILFLI) traverse the membrane as a helical segment. The Extracellular portion of the chain corresponds to 266–281 (DVACRAKECSILFKSQ). Residues 282–302 (WFIMLAVLNSAMNPVIYTLAS) traverse the membrane as a helical segment. The Cytoplasmic segment spans residues 303 to 378 (KEMRRAFFRL…RSFQNGVLCK (76 aa)). A disordered region spans residues 323–354 (TQASPMQPALDPSRSKSSSSNNSSHSPKVKED). Ser-326 is subject to Phosphoserine. Low complexity predominate over residues 337–348 (SKSSSSNNSSHS).

This sequence belongs to the G-protein coupled receptor 1 family. Most abundant in heart, lung, kidney and spleen; low but detectable in brain, thymus, muscle and testis; and nearly undetectable in liver, stomach, and intestine. Expressed in embryonic lung from embryonic day 14-18. Also abundantly detected in embryonic nasal cartilage, sphenoid bone, vena cava, Meckel's cartilage/incisor teeth, genital tubercle and bladder.

It is found in the cell membrane. In terms of biological role, receptor for the lysosphingolipid sphingosine 1-phosphate (S1P). S1P is a bioactive lysophospholipid that elicits diverse physiological effect on most types of cells and tissues. The sequence is that of Sphingosine 1-phosphate receptor 3 (S1pr3) from Mus musculus (Mouse).